The following is a 309-amino-acid chain: Elongation factor Ts (309 aa).

Positions 82 to 85 (TDFV) are involved in Mg(2+) ion dislocation from EF-Tu.

Belongs to the EF-Ts family.

The protein localises to the cytoplasm. Its function is as follows. Associates with the EF-Tu.GDP complex and induces the exchange of GDP to GTP. It remains bound to the aminoacyl-tRNA.EF-Tu.GTP complex up to the GTP hydrolysis stage on the ribosome. This chain is Elongation factor Ts, found in Rickettsia akari (strain Hartford).